The following is a 242-amino-acid chain: Small ribosomal subunit protein uS3 (242 aa).

In terms of domain architecture, KH type-2 spans 39–109 (IRQYVKATLA…QIRINVVEVT (71 aa)). A disordered region spans residues 220–242 (KVNQPKRRQQKRRQQYDDRSNEG). Positions 223–232 (QPKRRQQKRR) are enriched in basic residues. A compositionally biased stretch (basic and acidic residues) spans 233–242 (QQYDDRSNEG).

This sequence belongs to the universal ribosomal protein uS3 family. In terms of assembly, part of the 30S ribosomal subunit. Forms a tight complex with proteins S10 and S14.

In terms of biological role, binds the lower part of the 30S subunit head. Binds mRNA in the 70S ribosome, positioning it for translation. This is Small ribosomal subunit protein uS3 from Trichodesmium erythraeum (strain IMS101).